A 124-amino-acid polypeptide reads, in one-letter code: Fluoride-specific ion channel FluC (124 aa).

The next 4 helical transmembrane spans lie at 4–24 (VIFI…LSGW), 32–52 (AFPY…GLIM), 68–88 (GLTI…YETF), and 96–116 (LLIA…FTWL). Na(+)-binding residues include G75 and T78.

It belongs to the fluoride channel Fluc/FEX (TC 1.A.43) family.

It is found in the cell inner membrane. It carries out the reaction fluoride(in) = fluoride(out). Na(+) is not transported, but it plays an essential structural role and its presence is essential for fluoride channel function. Its function is as follows. Fluoride-specific ion channel. Important for reducing fluoride concentration in the cell, thus reducing its toxicity. The protein is Fluoride-specific ion channel FluC of Geotalea daltonii (strain DSM 22248 / JCM 15807 / FRC-32) (Geobacter daltonii).